We begin with the raw amino-acid sequence, 619 residues long: Telomere repeat-binding protein 3 (619 aa).

Positions 324–403 (VKLSIKSFRI…LDNLGFTLEP (80 aa)) constitute a Ubiquitin-like domain. Residues 504–563 (AQRRTRRPFSVTEVEALVQAVEELGTGRWRDVKLRAFEDADHRTYVDLKDKWKTLVHTAS) form the HTH myb-type domain. Residues 532–559 (WRDVKLRAFEDADHRTYVDLKDKWKTLV) constitute a DNA-binding region (H-T-H motif). Residues 593–619 (QGKHQARGASKDPDMNRGGAFESGVSV) form a disordered region.

In terms of assembly, homodimer and heterodimer with TRP1. In terms of tissue distribution, expressed ubiquitously. Highest expression in flowers and roots.

It is found in the nucleus. Functionally, binds specifically to the plant telomeric double-stranded DNA sequences. At least 2 repeats of telomeric sequences are required for binding. Induces DNA bending. In Arabidopsis thaliana (Mouse-ear cress), this protein is Telomere repeat-binding protein 3 (TRP3).